The primary structure comprises 271 residues: 4-hydroxy-tetrahydrodipicolinate reductase (271 aa).

10–15 (GAAGRM) lines the NAD(+) pocket. An NADP(+)-binding site is contributed by R37. NAD(+) is bound by residues 100–102 (GTT) and 124–127 (SGNM). The Proton donor/acceptor role is filled by H157. H158 contacts (S)-2,3,4,5-tetrahydrodipicolinate. K161 acts as the Proton donor in catalysis. 167 to 168 (GT) provides a ligand contact to (S)-2,3,4,5-tetrahydrodipicolinate. Residues 183-202 (SLSEHEQRGRDGHTGPRKDG) form a disordered region. The segment covering 185 to 202 (SEHEQRGRDGHTGPRKDG) has biased composition (basic and acidic residues).

Belongs to the DapB family.

The protein resides in the cytoplasm. It carries out the reaction (S)-2,3,4,5-tetrahydrodipicolinate + NAD(+) + H2O = (2S,4S)-4-hydroxy-2,3,4,5-tetrahydrodipicolinate + NADH + H(+). It catalyses the reaction (S)-2,3,4,5-tetrahydrodipicolinate + NADP(+) + H2O = (2S,4S)-4-hydroxy-2,3,4,5-tetrahydrodipicolinate + NADPH + H(+). It participates in amino-acid biosynthesis; L-lysine biosynthesis via DAP pathway; (S)-tetrahydrodipicolinate from L-aspartate: step 4/4. Catalyzes the conversion of 4-hydroxy-tetrahydrodipicolinate (HTPA) to tetrahydrodipicolinate. In Beijerinckia indica subsp. indica (strain ATCC 9039 / DSM 1715 / NCIMB 8712), this protein is 4-hydroxy-tetrahydrodipicolinate reductase.